The primary structure comprises 149 residues: MHCPFCSATDTKVIDSRLVAEGHQVRRRRECTECHERFTTFEGAELVMPRVIKRDGTRQPFDEEKLQAGMLRAVEKRPVSMDEIEQALSKIKSTLRATGEREVPSEMIGNLMMEQLMSLDKVAYIRFASVYRAFEDVSEFGEAIAKLQK.

The segment at 3–34 (CPFCSATDTKVIDSRLVAEGHQVRRRRECTEC) is a zinc-finger region. Residues 49 to 139 (PRVIKRDGTR…VYRAFEDVSE (91 aa)) enclose the ATP-cone domain.

Belongs to the NrdR family. Zn(2+) is required as a cofactor.

In terms of biological role, negatively regulates transcription of bacterial ribonucleotide reductase nrd genes and operons by binding to NrdR-boxes. The sequence is that of Transcriptional repressor NrdR from Shewanella sp. (strain MR-4).